Reading from the N-terminus, the 139-residue chain is Low molecular weight protein-tyrosine-phosphatase PtpB (139 aa).

Residue cysteine 7 is the Nucleophile of the active site. Arginine 13 is a catalytic residue. Aspartate 111 functions as the Proton donor in the catalytic mechanism.

The protein belongs to the low molecular weight phosphotyrosine protein phosphatase family.

The enzyme catalyses O-phospho-L-tyrosyl-[protein] + H2O = L-tyrosyl-[protein] + phosphate. Functionally, dephosphorylates the phosphotyrosine-containing proteins. This chain is Low molecular weight protein-tyrosine-phosphatase PtpB (ptpB), found in Staphylococcus epidermidis (strain ATCC 35984 / DSM 28319 / BCRC 17069 / CCUG 31568 / BM 3577 / RP62A).